A 416-amino-acid chain; its full sequence is Protein sine oculis (416 aa).

Disordered regions lie at residues 32–91 (TGLS…SGGG) and 262–329 (VSNW…NNGL). The span at 42 to 57 (NNNNNNSSTSNNNNST) shows a compositional bias: low complexity. Positions 79 to 91 (NGGGGGGVVSGGG) are enriched in gly residues. The segment at residues 218 to 277 (GEETSYCFKEKSRSVLRDWYSHNPYPSPREKRDLAEATGLTTTQVSNWFKNRRQRDRAAE) is a DNA-binding region (homeobox). Positions 273–290 (DRAAEHKDGSTDKQHLDS) are enriched in basic and acidic residues. A compositionally biased stretch (low complexity) spans 291-329 (SSDSEMEGSMLPSQSAQHQQQQQQQQHSPGNSSGNNNGL).

It belongs to the SIX/Sine oculis homeobox family. In terms of tissue distribution, in developing embryos, expressed in the eye disk epithelium, bolwig's organ and the optic lobe primordium at areas of invagination. In adults, present in photoreceptor cells in the apical regions of the retina, and in optic lobes.

The protein resides in the nucleus. Functionally, required for visual system development. May transcriptionally regulate genes necessary for optic lobe invagination and Bolwig's nerve formation. The chain is Protein sine oculis (so) from Drosophila melanogaster (Fruit fly).